Reading from the N-terminus, the 63-residue chain is Conotoxin TxMRCL-D012 (63 aa).

The first 19 residues, 1–19 (MRCLPVFVILLLLIASTPS), serve as a signal peptide directing secretion. Positions 20–47 (DTVPLKTKDDMPQASFHGNARRTLQMLS) are excised as a propeptide. Residue Q50 is modified to Pyrrolidone carboxylic acid.

It belongs to the conotoxin T superfamily. Contains 2 disulfide bonds that can be either 'C1-C3, C2-C4' or 'C1-C4, C2-C3', since these disulfide connectivities have been observed for conotoxins with cysteine framework V (for examples, see AC P0DQQ7 and AC P81755). In terms of tissue distribution, expressed by the venom duct.

The protein resides in the secreted. The polypeptide is Conotoxin TxMRCL-D012 (Conus textile (Cloth-of-gold cone)).